The sequence spans 570 residues: MKNNTMNTLIGAAQDESPVDLLVRNVRLVNVLSGEIHDAHIAVKDGIVVGFEEYEALHVVEGNGRHCIPGLIDGHIHIESTLLSPARFAAAAAPHGTAAVMCDPHEIANVMGAEGIEYMLHASAGLPLSVYVMMPSCVPATHMETAGATLRAEDVQDFLSRYPDRMPGLAEMMNYPGVLFRDDEVMAKLEAAASHVIDGHAPLLRGKALNAYVLGGPASDHETSDADEAREKLRKGMHLMIREGGSQEHNLEELVTVLNEFNTQNVSFVSDDKVVNDLMESGHMDDILRKAMAAGIPPVRAVQMASINTARYFRLHRRGAVAPGYRADFVLLDDLQTMRISECYLGGRNVKEIDFTGHSAAFSANTVHVAGLNTDSLHVAAGNGNLRVIGIVPGQVITHALELPPTLREGAAVADPSRDLAKLAVFERHKGTGNVGLGFTAGLGLHKGALAGTVSHDSHNLIVAGMDDADMITAAEEVQCIGGGLAVACDGRVLASLPLPIAGLMSDAPVEDVLAGLRGVNEALATLGYKLSSPFAALAFLSLAVIPSLKLTDKGLVDVHKFEIVPLWTA.

This sequence belongs to the metallo-dependent hydrolases superfamily. Adenine deaminase family. Mn(2+) is required as a cofactor.

The catalysed reaction is adenine + H2O + H(+) = hypoxanthine + NH4(+). The polypeptide is Adenine deaminase (Oleidesulfovibrio alaskensis (strain ATCC BAA-1058 / DSM 17464 / G20) (Desulfovibrio alaskensis)).